The chain runs to 159 residues: Afifavidin (159 aa).

The first 23 residues, 1–23 (MRRLASLAVALPLLAVVASPALA), serve as a signal peptide directing secretion. The region spanning 36–151 (GVPAVSSSWV…GSDTFTLVNK (116 aa)) is the Avidin-like domain. Residues Asn46, Ser50, Tyr66, Asn68, and Gly74 each contribute to the biotin site. Cysteines 75 and 104 form a disulfide. Residues Ser106, Thr108, and Asp144 each contribute to the biotin site.

The protein belongs to the avidin/streptavidin family. In terms of assembly, exhibits a dynamic oligomeric assembly: the apo form self-assembles mostly into toroid-shaped homooctamers, with a small fraction of homodimers, yet upon biotin binding the intact afifavidin consists solely of the dimer.

Its subcellular location is the secreted. The exact role played by afifavidin is still obscure. Forms a strong non-covalent complex with biotin and 2-iminobiotin. The polypeptide is Afifavidin (Afifella pfennigii (Rhodobium pfennigii)).